The sequence spans 151 residues: Large ribosomal subunit protein bL9 (151 aa).

It belongs to the bacterial ribosomal protein bL9 family.

In terms of biological role, binds to the 23S rRNA. The protein is Large ribosomal subunit protein bL9 of Carboxydothermus hydrogenoformans (strain ATCC BAA-161 / DSM 6008 / Z-2901).